Consider the following 154-residue polypeptide: Large ribosomal subunit protein uL30 (154 aa).

Residues 122-141 (RGGHDGIKTPASDGGQLGKH) form a disordered region.

This sequence belongs to the universal ribosomal protein uL30 family. Part of the 50S ribosomal subunit.

The polypeptide is Large ribosomal subunit protein uL30 (Halobacterium salinarum (strain ATCC 29341 / DSM 671 / R1)).